We begin with the raw amino-acid sequence, 73 residues long: UPF0154 protein BcerKBAB4_3367 (73 aa).

Residues 4-24 (WLGILVGVVALVAGVALGFFI) form a helical membrane-spanning segment.

The protein belongs to the UPF0154 family.

The protein localises to the cell membrane. The chain is UPF0154 protein BcerKBAB4_3367 from Bacillus mycoides (strain KBAB4) (Bacillus weihenstephanensis).